A 343-amino-acid chain; its full sequence is Protein RecA (343 aa).

66–73 (GPESSGKT) contributes to the ATP binding site.

This sequence belongs to the RecA family.

The protein localises to the cytoplasm. Functionally, can catalyze the hydrolysis of ATP in the presence of single-stranded DNA, the ATP-dependent uptake of single-stranded DNA by duplex DNA, and the ATP-dependent hybridization of homologous single-stranded DNAs. It interacts with LexA causing its activation and leading to its autocatalytic cleavage. This chain is Protein RecA, found in Rickettsia conorii (strain ATCC VR-613 / Malish 7).